The primary structure comprises 352 residues: S-adenosylmethionine:tRNA ribosyltransferase-isomerase (352 aa).

The protein belongs to the QueA family. In terms of assembly, monomer.

It localises to the cytoplasm. It carries out the reaction 7-aminomethyl-7-carbaguanosine(34) in tRNA + S-adenosyl-L-methionine = epoxyqueuosine(34) in tRNA + adenine + L-methionine + 2 H(+). It participates in tRNA modification; tRNA-queuosine biosynthesis. In terms of biological role, transfers and isomerizes the ribose moiety from AdoMet to the 7-aminomethyl group of 7-deazaguanine (preQ1-tRNA) to give epoxyqueuosine (oQ-tRNA). The protein is S-adenosylmethionine:tRNA ribosyltransferase-isomerase of Syntrophomonas wolfei subsp. wolfei (strain DSM 2245B / Goettingen).